The chain runs to 186 residues: NADH-quinone oxidoreductase subunit B 2 (186 aa).

Residues 1–27 form a disordered region; that stretch reads MPSFTQPHSAPRNFQFPGQQRQGDPTM. 4 residues coordinate [4Fe-4S] cluster: cysteine 65, cysteine 66, cysteine 130, and cysteine 160.

The protein belongs to the complex I 20 kDa subunit family. As to quaternary structure, NDH-1 is composed of 14 different subunits. Subunits NuoB, C, D, E, F, and G constitute the peripheral sector of the complex. It depends on [4Fe-4S] cluster as a cofactor.

The protein resides in the cell inner membrane. It carries out the reaction a quinone + NADH + 5 H(+)(in) = a quinol + NAD(+) + 4 H(+)(out). Functionally, NDH-1 shuttles electrons from NADH, via FMN and iron-sulfur (Fe-S) centers, to quinones in the respiratory chain. The immediate electron acceptor for the enzyme in this species is believed to be ubiquinone. Couples the redox reaction to proton translocation (for every two electrons transferred, four hydrogen ions are translocated across the cytoplasmic membrane), and thus conserves the redox energy in a proton gradient. The sequence is that of NADH-quinone oxidoreductase subunit B 2 from Rhizobium etli (strain ATCC 51251 / DSM 11541 / JCM 21823 / NBRC 15573 / CFN 42).